The following is a 377-amino-acid chain: MKIDYYEALGVTRTADDKTLKAAFRKLAMQYHPDRNPDDPEAERKFKEIGEAYETLKDPQKRAAYDRFGHAAFENGGMGGGFGNGFGGAGGFADIFEDIFGEMMGGGRRRSNGGRERGADLRYNMEVTLEEAYAGKTAQIRVPTSITCDECSGSGAKPGSQPTTCTMCSGSGRVRAAQGFFSVERTCPGCNGRGQIIKDPCEKCHGQGRVTQERSLSVNIPTGIEDGTRIRLAGEGEAGLRGGPAGDLYIFLSVKPHEFFQRDGADLYCKVPISMTTAALGGQFEVSTLDGTQTRVKVPEGTQNGKQFRLKGKGMPVLRQSVTGDLYIQIDIETPQNLSKRQRELLEEFEKLSSQENSPKSAGFFSRMKEFFEGIGE.

The region spanning 4-69 (DYYEALGVTR…QKRAAYDRFG (66 aa)) is the J domain. The CR-type zinc finger occupies 135–213 (GKTAQIRVPT…CHGQGRVTQE (79 aa)). 8 residues coordinate Zn(2+): cysteine 148, cysteine 151, cysteine 165, cysteine 168, cysteine 187, cysteine 190, cysteine 201, and cysteine 204. 4 CXXCXGXG motif repeats span residues 148 to 155 (CDECSGSG), 165 to 172 (CTMCSGSG), 187 to 194 (CPGCNGRG), and 201 to 208 (CEKCHGQG).

This sequence belongs to the DnaJ family. In terms of assembly, homodimer. It depends on Zn(2+) as a cofactor.

It localises to the cytoplasm. In terms of biological role, participates actively in the response to hyperosmotic and heat shock by preventing the aggregation of stress-denatured proteins and by disaggregating proteins, also in an autonomous, DnaK-independent fashion. Unfolded proteins bind initially to DnaJ; upon interaction with the DnaJ-bound protein, DnaK hydrolyzes its bound ATP, resulting in the formation of a stable complex. GrpE releases ADP from DnaK; ATP binding to DnaK triggers the release of the substrate protein, thus completing the reaction cycle. Several rounds of ATP-dependent interactions between DnaJ, DnaK and GrpE are required for fully efficient folding. Also involved, together with DnaK and GrpE, in the DNA replication of plasmids through activation of initiation proteins. This Brucella abortus (strain S19) protein is Chaperone protein DnaJ.